The chain runs to 432 residues: Uracil permease (432 aa).

Transmembrane regions (helical) follow at residues 25 to 45 (LFAM…DPSI), 65 to 85 (VPAY…AKTA), 89 to 109 (GAAM…ALII), 124 to 144 (VVVG…AVGM), 155 to 175 (LLHF…SVLA), 181 to 201 (LIPV…VGLV), 206 to 226 (VAAA…DYPV), 228 to 248 (VTWE…SEHI), 305 to 325 (VYSV…GFVG), 330 to 350 (LISS…FGII), 370 to 390 (NLVI…LKIS), and 393 to 413 (FQIT…LILP).

It belongs to the nucleobase:cation symporter-2 (NCS2) (TC 2.A.40) family.

The protein localises to the cell membrane. Transport of uracil in the cell. The polypeptide is Uracil permease (pyrP) (Bacillus caldolyticus).